The following is a 351-amino-acid chain: Spermidine/putrescine import ATP-binding protein PotA (351 aa).

The ABC transporter domain maps to Leu6–Ile236. An ATP-binding site is contributed by Gly38–Thr45.

The protein belongs to the ABC transporter superfamily. Spermidine/putrescine importer (TC 3.A.1.11.1) family. As to quaternary structure, the complex is composed of two ATP-binding proteins (PotA), two transmembrane proteins (PotB and PotC) and a solute-binding protein (PotD).

It localises to the cell membrane. The enzyme catalyses ATP + H2O + polyamine-[polyamine-binding protein]Side 1 = ADP + phosphate + polyamineSide 2 + [polyamine-binding protein]Side 1.. Its function is as follows. Part of the ABC transporter complex PotABCD involved in spermidine/putrescine import. Responsible for energy coupling to the transport system. The sequence is that of Spermidine/putrescine import ATP-binding protein PotA from Mycoplasma capricolum subsp. capricolum (strain California kid / ATCC 27343 / NCTC 10154).